Reading from the N-terminus, the 114-residue chain is Nucleoid-associated protein NT01CX_0824 (114 aa).

The protein belongs to the YbaB/EbfC family. Homodimer.

Its subcellular location is the cytoplasm. It is found in the nucleoid. Functionally, binds to DNA and alters its conformation. May be involved in regulation of gene expression, nucleoid organization and DNA protection. This chain is Nucleoid-associated protein NT01CX_0824, found in Clostridium novyi (strain NT).